The primary structure comprises 427 residues: Enolase (427 aa).

Position 163 (Q163) interacts with (2R)-2-phosphoglycerate. E205 (proton donor) is an active-site residue. The Mg(2+) site is built by D242, E285, and D312. (2R)-2-phosphoglycerate contacts are provided by K337, R366, S367, and K388. K337 (proton acceptor) is an active-site residue.

This sequence belongs to the enolase family. It depends on Mg(2+) as a cofactor.

Its subcellular location is the cytoplasm. The protein localises to the secreted. The protein resides in the cell surface. The catalysed reaction is (2R)-2-phosphoglycerate = phosphoenolpyruvate + H2O. The protein operates within carbohydrate degradation; glycolysis; pyruvate from D-glyceraldehyde 3-phosphate: step 4/5. Functionally, catalyzes the reversible conversion of 2-phosphoglycerate (2-PG) into phosphoenolpyruvate (PEP). It is essential for the degradation of carbohydrates via glycolysis. This is Enolase from Rhodopseudomonas palustris (strain BisB5).